The chain runs to 101 residues: Putative pterin-4-alpha-carbinolamine dehydratase (101 aa).

It belongs to the pterin-4-alpha-carbinolamine dehydratase family.

It carries out the reaction (4aS,6R)-4a-hydroxy-L-erythro-5,6,7,8-tetrahydrobiopterin = (6R)-L-erythro-6,7-dihydrobiopterin + H2O. This chain is Putative pterin-4-alpha-carbinolamine dehydratase, found in Rhodopseudomonas palustris (strain HaA2).